The primary structure comprises 445 residues: D-serine dehydratase (445 aa).

K118 is modified (N6-(pyridoxal phosphate)lysine).

Belongs to the serine/threonine dehydratase family. DsdA subfamily. Monomer. It depends on pyridoxal 5'-phosphate as a cofactor.

It carries out the reaction D-serine = pyruvate + NH4(+). The protein is D-serine dehydratase of Serratia proteamaculans (strain 568).